We begin with the raw amino-acid sequence, 453 residues long: MSPQTETKAGVGFKAGVKEYKLTYYTPEYETKDTDILAAFRVTPQPGVPPEERGAAVAAESSTGTWTTVWTDGLTSLDRYKGRCYHIEPVPGEEDQFIAYVAYPLDLFEEGSVTNMFTSIVGNVFGFKALRALRLEDLRIPVAYVKTFQGPPHGIQVERDKLNKYGRPLLGCTIKPKLGLSAKNYGRAVYECLRGGLDFTKDDENVNSQPFMRWRDRFLFCAEAIYKSQAETGEIKGHYLNATAGTCEEMIKRAVFARELGVPIVMHDYLTGGFTANTSLAHYCRDNGLLLHIHRAMHAVIDRQKNHGMHFRVLAKALRMSGGDHIHSGTVVGKLEGERDITLGFVDLLRDDYIEKDRSRGIYFTQDWVSLPGVLPVASRGIHVWHMPALTEIFGDDSVLQFGGGTIGHPWGNAPGAVANRVALEACVKARNEGRDLAAEGGEIIREACKWSP.

A propeptide spanning residues 1-2 is cleaved from the precursor; the sequence is MS. At proline 3 the chain carries N-acetylproline. Lysine 14 carries the post-translational modification N6,N6,N6-trimethyllysine. Positions 123 and 173 each coordinate substrate. Residue lysine 175 is the Proton acceptor of the active site. Position 177 (lysine 177) interacts with substrate. Mg(2+)-binding residues include lysine 201, aspartate 203, and glutamate 204. N6-carboxylysine is present on lysine 201. The Proton acceptor role is filled by histidine 294. Arginine 295, histidine 327, and serine 379 together coordinate substrate.

This sequence belongs to the RuBisCO large chain family. Type I subfamily. Heterohexadecamer of 8 large chains and 8 small chains; disulfide-linked. The disulfide link is formed within the large subunit homodimers. Requires Mg(2+) as cofactor. The disulfide bond which can form in the large chain dimeric partners within the hexadecamer appears to be associated with oxidative stress and protein turnover.

The protein resides in the plastid. The protein localises to the chloroplast. It carries out the reaction 2 (2R)-3-phosphoglycerate + 2 H(+) = D-ribulose 1,5-bisphosphate + CO2 + H2O. The enzyme catalyses D-ribulose 1,5-bisphosphate + O2 = 2-phosphoglycolate + (2R)-3-phosphoglycerate + 2 H(+). Its function is as follows. RuBisCO catalyzes two reactions: the carboxylation of D-ribulose 1,5-bisphosphate, the primary event in carbon dioxide fixation, as well as the oxidative fragmentation of the pentose substrate in the photorespiration process. Both reactions occur simultaneously and in competition at the same active site. The sequence is that of Ribulose bisphosphate carboxylase large chain from Galium elongatum (Great marsh bedstraw).